Consider the following 1290-residue polypeptide: Alpha-factor-transporting ATPase (1290 aa).

The Cytoplasmic segment spans residues 1–25 (MNFLSFKTTKHYHIFRYVNIRNDYR). Residues 26–46 (LLMIMIIGTVATGLVPAITSI) form a helical membrane-spanning segment. Positions 27–319 (LMIMIIGTVA…TLHQIVVLQK (293 aa)) constitute an ABC transmembrane type-1 1 domain. Over 47–75 (LTGRVFDLLSVFVANGSHQGLYSQLVQRS) the chain is Extracellular. A glycan (N-linked (GlcNAc...) asparagine) is linked at N61. A helical transmembrane segment spans residues 76-96 (MAVMALGAASVPVMWLSLTSW). Topologically, residues 97–150 (MHIGERQGFRIRSQILEAYLEEKPMEWYDNNEKLLGDFTQINRCVEELRSSSAE) are cytoplasmic. Residues 151–171 (ASAITFQNLVAICALLGTSFY) traverse the membrane as a helical segment. The Extracellular segment spans residues 172–173 (YS). A helical membrane pass occupies residues 174 to 194 (WSLTLIILCSSPIITFFAVVF). Residues 195–262 (SRMIHVYSEK…SCFFVAANAG (68 aa)) lie on the Cytoplasmic side of the membrane. A helical membrane pass occupies residues 263–283 (ILRFLTLTMFVQGFWFGSAMI). Residues 284–296 (KKGKLNINDVITC) lie on the Extracellular side of the membrane. A helical membrane pass occupies residues 297–317 (FHSCIMLGSTLNNTLHQIVVL). Over 318–715 (QKGGVAMEKI…RMIKSIRYKK (398 aa)) the chain is Cytoplasmic. Residues 357-603 (LTFANVSFSY…PTTTFSTWYH (247 aa)) form the ABC transporter 1 domain. ATP is bound at residue 392–399 (GKSGSGKS). Residues 716 to 736 (ILILGLLCSLIAGATNPVFSY) form a helical membrane-spanning segment. The ABC transmembrane type-1 2 domain maps to 717–1007 (LILGLLCSLI…LVSQIPDISR (291 aa)). Residues 737-763 (TFSFLLEGIVPSTDGKTGSSHYLAKWS) lie on the Extracellular side of the membrane. The chain crosses the membrane as a helical span at residues 764–784 (LLVLGVAAADGIFNFAKGFLL). At 785–838 (DCCSEYWVMDLRNEVMEKLTRKNMDWFSGENNKASEISALVLNDLRDLRSLVSE) the chain is on the cytoplasmic side. A helical membrane pass occupies residues 839-859 (FLSAMTSFVTVSTIGLIWALV). The Extracellular segment spans residues 860-865 (SGWKLS). A helical transmembrane segment spans residues 866 to 886 (LVCISMFPLIIIFSAIYGGIL). Residues 887–945 (QKCETDYKTSVAQLENCLYQIVTNIKTIKCLQAEFHFQLTYHDLKIKMQQIASKRAIAT) are Cytoplasmic-facing. Residues 946 to 966 (GFGISMTNMIVMCIQAIIYYY) traverse the membrane as a helical segment. Residues 967-981 (GLKLVMIHEYTSKEM) lie on the Extracellular side of the membrane. A helical membrane pass occupies residues 982–1002 (FTTFTLLLFTIMSCTSLVSQI). The Cytoplasmic segment spans residues 1003-1290 (PDISRGQRAA…LFQIVSNQSS (288 aa)). A Glycyl lysine isopeptide (Lys-Gly) (interchain with G-Cter in ubiquitin) cross-link involves residue K1022. The 236-residue stretch at 1052 to 1287 (VSIQNLTFAY…RGELFQIVSN (236 aa)) folds into the ABC transporter 2 domain. 1087–1094 (GESGTGKS) serves as a coordination point for ATP.

It belongs to the ABC transporter superfamily. Alpha-factor sex pheromone exporter (TC 3.A.1.206) family. Degraded via the ubiquitin system.

It localises to the membrane. The enzyme catalyses an [alpha-factor](in) + ATP + H2O = an [alpha-factor](out) + ADP + phosphate + H(+). Its function is as follows. STE6 is required in yeast MATA cells for production of A-factor pheromone. STE6 is involved in the transport of the farnesyl-derivation of the A-factor pheromone. The polypeptide is Alpha-factor-transporting ATPase (STE6) (Saccharomyces cerevisiae (strain ATCC 204508 / S288c) (Baker's yeast)).